A 147-amino-acid chain; its full sequence is HTH-type transcriptional regulator MntR (147 aa).

One can recognise an HTH dtxR-type domain in the interval 1-63; the sequence is MPTPSMEDYI…YEKYRGFVLT (63 aa). Mn(2+)-binding residues include aspartate 8, glutamate 11, histidine 77, glutamate 99, glutamate 102, and histidine 103.

It belongs to the DtxR/MntR family. As to quaternary structure, homodimer.

It localises to the cytoplasm. With respect to regulation, DNA binding is strongly activated by Mn(2+). In terms of biological role, central regulator of manganese homeostasis. The protein is HTH-type transcriptional regulator MntR of Oceanobacillus iheyensis (strain DSM 14371 / CIP 107618 / JCM 11309 / KCTC 3954 / HTE831).